Reading from the N-terminus, the 278-residue chain is Orotidine 5'-phosphate decarboxylase (278 aa).

Substrate is bound by residues aspartate 40, 65–67, 96–105, tyrosine 230, and arginine 248; these read KTH and DRKFIDIGNT. Lysine 98 acts as the Proton donor in catalysis.

Belongs to the OMP decarboxylase family.

It carries out the reaction orotidine 5'-phosphate + H(+) = UMP + CO2. Its pathway is pyrimidine metabolism; UMP biosynthesis via de novo pathway; UMP from orotate: step 2/2. This is Orotidine 5'-phosphate decarboxylase (pyrG) from Penicillium chrysogenum (Penicillium notatum).